A 230-amino-acid polypeptide reads, in one-letter code: 7-cyano-7-deazaguanine synthase (230 aa).

9 to 19 (YSGGLDSTTCL) lines the ATP pocket. Residues cysteine 190, cysteine 200, cysteine 203, and cysteine 206 each coordinate Zn(2+).

Belongs to the QueC family. Zn(2+) serves as cofactor.

It carries out the reaction 7-carboxy-7-deazaguanine + NH4(+) + ATP = 7-cyano-7-deazaguanine + ADP + phosphate + H2O + H(+). Its pathway is purine metabolism; 7-cyano-7-deazaguanine biosynthesis. Catalyzes the ATP-dependent conversion of 7-carboxy-7-deazaguanine (CDG) to 7-cyano-7-deazaguanine (preQ(0)). This Syntrophotalea carbinolica (strain DSM 2380 / NBRC 103641 / GraBd1) (Pelobacter carbinolicus) protein is 7-cyano-7-deazaguanine synthase.